Reading from the N-terminus, the 130-residue chain is Fluoride-specific ion channel FluC (130 aa).

Helical transmembrane passes span 4 to 24 (MINV…RYFI), 35 to 55 (GFPI…GLLT), 68 to 88 (LNLF…TFSL), and 99 to 119 (AVFG…GVVL). G78 and T81 together coordinate Na(+).

This sequence belongs to the fluoride channel Fluc/FEX (TC 1.A.43) family.

The protein localises to the cell membrane. It carries out the reaction fluoride(in) = fluoride(out). Its activity is regulated as follows. Na(+) is not transported, but it plays an essential structural role and its presence is essential for fluoride channel function. In terms of biological role, fluoride-specific ion channel. Important for reducing fluoride concentration in the cell, thus reducing its toxicity. This Ruminiclostridium cellulolyticum (strain ATCC 35319 / DSM 5812 / JCM 6584 / H10) (Clostridium cellulolyticum) protein is Fluoride-specific ion channel FluC.